The sequence spans 401 residues: 26S proteasome regulatory subunit 6A (401 aa).

189–196 contacts ATP; the sequence is GPPGTGKT.

Belongs to the AAA ATPase family. In terms of assembly, the 26S proteasome consists of a 20S proteasome core and two 19S regulatory subunits. The 20S proteasome core is composed of 28 subunits that are arranged in four stacked rings, resulting in a barrel-shaped structure. The two end rings are each formed by seven alpha subunits, and the two central rings are each formed by seven beta subunits. The catalytic chamber with the active sites is on the inside of the barrel.

The protein localises to the cytoplasm. Its subcellular location is the nucleus. Its function is as follows. Acts as a regulatory subunit of the 26S proteasome which degrades poly-ubiquitinated proteins in the cytoplasm and in the nucleus. It is essential for the regulated turnover of proteins and for the removal of misfolded proteins. The proteasome is a multicatalytic proteinase complex that is characterized by its ability to cleave peptides with Arg, Phe, Tyr, Leu, and Glu adjacent to the leaving group at neutral or slightly basic pH. The sequence is that of 26S proteasome regulatory subunit 6A (RPT5) from Encephalitozoon cuniculi (strain GB-M1) (Microsporidian parasite).